The primary structure comprises 234 residues: MTNIRKTHPLLKIVNHSLIDLPAPSNISAWWNFGSLLGLCLMIQILTGLFLAMHYTSDTATAFSSVTHICRDVNYGWLIRYLHANGASMFFICLYMHVGRGIYYGSYTYLETWNIGIILLFAVMATAFMGYVLPWGQMSFWGATVITNLLSAIPYIGTTLVEWIWGGFSVDKATLTRFFAFHFILPFIIAALVMIHLLFLHETGSNNPSGIPSDSDKIPFHPYYTIKDVLGFLM.

The next 4 membrane-spanning stretches (helical) occupy residues 33 to 53, 77 to 98, 113 to 133, and 178 to 198; these read FGSLLGLCLMIQILTGLFLAM, WLIRYLHANGASMFFICLYMHV, WNIGIILLFAVMATAFMGYVL, and FFAFHFILPFIIAALVMIHLL. Heme b is bound by residues His-83 and His-97. Heme b contacts are provided by His-182 and His-196. An a ubiquinone-binding site is contributed by His-201. Residues 226–234 traverse the membrane as a helical segment; that stretch reads IKDVLGFLM.

The protein belongs to the cytochrome b family. In terms of assembly, the cytochrome bc1 complex contains 11 subunits: 3 respiratory subunits (MT-CYB, CYC1 and UQCRFS1), 2 core proteins (UQCRC1 and UQCRC2) and 6 low-molecular weight proteins (UQCRH/QCR6, UQCRB/QCR7, UQCRQ/QCR8, UQCR10/QCR9, UQCR11/QCR10 and a cleavage product of UQCRFS1). This cytochrome bc1 complex then forms a dimer. Requires heme b as cofactor.

It is found in the mitochondrion inner membrane. Its function is as follows. Component of the ubiquinol-cytochrome c reductase complex (complex III or cytochrome b-c1 complex) that is part of the mitochondrial respiratory chain. The b-c1 complex mediates electron transfer from ubiquinol to cytochrome c. Contributes to the generation of a proton gradient across the mitochondrial membrane that is then used for ATP synthesis. This Lepus alleni (Antelope jackrabbit) protein is Cytochrome b (MT-CYB).